Consider the following 110-residue polypeptide: Mitochondrial pyruvate carrier 1 (110 aa).

The next 2 helical transmembrane spans lie at 20–36 and 44–61; these read HFWG…AGLV and MISG…ALFM.

Belongs to the mitochondrial pyruvate carrier (MPC) (TC 2.A.105) family.

It localises to the mitochondrion inner membrane. Functionally, mediates the uptake of pyruvate into mitochondria. The protein is Mitochondrial pyruvate carrier 1 of Arabidopsis thaliana (Mouse-ear cress).